Consider the following 148-residue polypeptide: 3-dehydroquinate dehydratase (148 aa).

The active-site Proton acceptor is the Tyr-23. Asn-75, His-81, and Asp-88 together coordinate substrate. His-101 serves as the catalytic Proton donor. Substrate-binding positions include 102-103 (MS) and Arg-112.

Belongs to the type-II 3-dehydroquinase family. Homododecamer.

It carries out the reaction 3-dehydroquinate = 3-dehydroshikimate + H2O. The protein operates within metabolic intermediate biosynthesis; chorismate biosynthesis; chorismate from D-erythrose 4-phosphate and phosphoenolpyruvate: step 3/7. Catalyzes a trans-dehydration via an enolate intermediate. The sequence is that of 3-dehydroquinate dehydratase from Syntrophotalea carbinolica (strain DSM 2380 / NBRC 103641 / GraBd1) (Pelobacter carbinolicus).